A 264-amino-acid chain; its full sequence is uncharacterized protein (264 aa).

The 241-residue stretch at 3–243 folds into the ABC transporter domain; the sequence is LQLDNVSLKR…QILSAFFDTP (241 aa). Position 35–42 (35–42) interacts with ATP; that stretch reads GLNGAGKT.

Belongs to the ABC transporter superfamily.

This is an uncharacterized protein from Bacillus subtilis (strain 168).